A 316-amino-acid polypeptide reads, in one-letter code: Beta-ketoacyl-[acyl-carrier-protein] synthase III 1 (316 aa).

Residues Cys-112 and His-243 contribute to the active site. An ACP-binding region spans residues 244-248 (QANYR). Asn-273 is a catalytic residue.

This sequence belongs to the thiolase-like superfamily. FabH family. Homodimer.

The protein localises to the cytoplasm. The catalysed reaction is malonyl-[ACP] + acetyl-CoA + H(+) = 3-oxobutanoyl-[ACP] + CO2 + CoA. It functions in the pathway lipid metabolism; fatty acid biosynthesis. In terms of biological role, catalyzes the condensation reaction of fatty acid synthesis by the addition to an acyl acceptor of two carbons from malonyl-ACP. Catalyzes the first condensation reaction which initiates fatty acid synthesis and may therefore play a role in governing the total rate of fatty acid production. Possesses both acetoacetyl-ACP synthase and acetyl transacylase activities. Its substrate specificity determines the biosynthesis of branched-chain and/or straight-chain of fatty acids. The protein is Beta-ketoacyl-[acyl-carrier-protein] synthase III 1 of Vibrio cholerae serotype O1 (strain ATCC 39315 / El Tor Inaba N16961).